We begin with the raw amino-acid sequence, 323 residues long: Arginase-1 (323 aa).

A disordered region spans residues 1 to 27; that stretch reads MSSKPKPIEIIGAPFSKGQPRGGVEKG. At Lys-17 the chain carries N6-succinyllysine. 2 positions are modified to phosphoserine: Ser-62 and Ser-72. Position 75 is an N6-succinyllysine (Lys-75). Mn(2+) is bound by residues His-101, Asp-124, His-126, and Asp-128. Substrate-binding positions include 126 to 130 and 137 to 139; these read HTDIN and SGN. Phosphoserine is present on Ser-163. A substrate-binding site is contributed by Asp-183. Position 217 is a phosphoserine (Ser-217). Mn(2+)-binding residues include Asp-232 and Asp-234. Positions 246 and 277 each coordinate substrate. At Thr-281 the chain carries Phosphothreonine.

It belongs to the arginase family. In terms of assembly, homotrimer. Interacts with CMTM6. Mn(2+) is required as a cofactor. In terms of tissue distribution, detected in liver (at protein level).

The protein localises to the cytoplasm. Its subcellular location is the cytoplasmic granule. The catalysed reaction is L-arginine + H2O = urea + L-ornithine. Its pathway is nitrogen metabolism; urea cycle; L-ornithine and urea from L-arginine: step 1/1. Its activity is regulated as follows. Inactivated by diethyl pyrocarbonate (DEPC). Its function is as follows. Key element of the urea cycle converting L-arginine to urea and L-ornithine, which is further metabolized into metabolites proline and polyamides that drive collagen synthesis and bioenergetic pathways critical for cell proliferation, respectively; the urea cycle takes place primarily in the liver and, to a lesser extent, in the kidneys. In terms of biological role, functions in L-arginine homeostasis in nonhepatic tissues characterized by the competition between nitric oxide synthase (NOS) and arginase for the available intracellular substrate arginine. Arginine metabolism is a critical regulator of innate and adaptive immune responses. Involved in an antimicrobial effector pathway in polymorphonuclear granulocytes (PMN). Upon PMN cell death is liberated from the phagolysosome and depletes arginine in the microenvironment leading to suppressed T cell and natural killer (NK) cell proliferation and cytokine secretion. In group 2 innate lymphoid cells (ILC2s) promotes acute type 2 inflammation in the lung and is involved in optimal ILC2 proliferation but not survival. Plays a role in the immune response of alternatively activated or M2 macrophages in processes such as wound healing and tissue regeneration, immune defense against multicellular pathogens and parasites, and immune suppression and allergic inflammation; the regulatory outcome seems to be organ specific. In tumor-infiltrating dendritic cells (DCs) and myeloid-derived suppressor cells (MDSCs) plays a role in suppression of T cell-mediated antitumor immunity. This chain is Arginase-1 (Arg1), found in Rattus norvegicus (Rat).